Consider the following 490-residue polypeptide: Aspartyl/glutamyl-tRNA(Asn/Gln) amidotransferase subunit B (490 aa).

It belongs to the GatB/GatE family. GatB subfamily. Heterotrimer of A, B and C subunits.

It catalyses the reaction L-glutamyl-tRNA(Gln) + L-glutamine + ATP + H2O = L-glutaminyl-tRNA(Gln) + L-glutamate + ADP + phosphate + H(+). It carries out the reaction L-aspartyl-tRNA(Asn) + L-glutamine + ATP + H2O = L-asparaginyl-tRNA(Asn) + L-glutamate + ADP + phosphate + 2 H(+). Allows the formation of correctly charged Asn-tRNA(Asn) or Gln-tRNA(Gln) through the transamidation of misacylated Asp-tRNA(Asn) or Glu-tRNA(Gln) in organisms which lack either or both of asparaginyl-tRNA or glutaminyl-tRNA synthetases. The reaction takes place in the presence of glutamine and ATP through an activated phospho-Asp-tRNA(Asn) or phospho-Glu-tRNA(Gln). The chain is Aspartyl/glutamyl-tRNA(Asn/Gln) amidotransferase subunit B from Synechococcus sp. (strain JA-2-3B'a(2-13)) (Cyanobacteria bacterium Yellowstone B-Prime).